Consider the following 309-residue polypeptide: Movement protein (309 aa).

The segment at 245–273 (HLSLNESKTLPSTSTTEAEGSERRIHIGA) is disordered. Polar residues predominate over residues 246-262 (LSLNESKTLPSTSTTEA).

It localises to the host cell junction. The protein localises to the host plasmodesma. In terms of biological role, transports viral genome to neighboring plant cells directly through plasmosdesmata, without any budding. The movement protein allows efficient cell to cell propagation, by bypassing the host cell wall barrier. Acts by forming a tubular structure at the host plasmodesmata, enlarging it enough to allow free passage of virion capsids. The sequence is that of Movement protein from Solanum lycopersicum (Tomato).